A 334-amino-acid polypeptide reads, in one-letter code: Ribosomal RNA small subunit methyltransferase H (334 aa).

Residues 34-36, Asp-52, Ala-87, Asp-100, and Gln-107 each bind S-adenosyl-L-methionine; that span reads GGY.

This sequence belongs to the methyltransferase superfamily. RsmH family.

Its subcellular location is the cytoplasm. The catalysed reaction is cytidine(1402) in 16S rRNA + S-adenosyl-L-methionine = N(4)-methylcytidine(1402) in 16S rRNA + S-adenosyl-L-homocysteine + H(+). Its function is as follows. Specifically methylates the N4 position of cytidine in position 1402 (C1402) of 16S rRNA. This is Ribosomal RNA small subunit methyltransferase H from Maricaulis maris (strain MCS10) (Caulobacter maris).